The sequence spans 425 residues: Raffinose permease (425 aa).

Over 1-11 (MNSASTHKNTD) the chain is Cytoplasmic. The chain crosses the membrane as a helical span at residues 12–32 (FWIFGLFFFLYFFIMATCFPF). Topologically, residues 33-48 (LPVWLSDVVGLSKTDT) are periplasmic. Residues 49 to 69 (GIVFSCLSLFAISFQPLLGVI) traverse the membrane as a helical segment. The Cytoplasmic segment spans residues 70-78 (SDRLGLKKN). Residues 79–99 (LIWSISLLLVFFAPFFLYVFA) form a helical membrane-spanning segment. The Periplasmic segment spans residues 100–105 (PLLHLN). The chain crosses the membrane as a helical span at residues 106 to 126 (IWAGALTGGVFIGFVFSAGAG). The Cytoplasmic portion of the chain corresponds to 127 to 147 (AIEAYIERVSRSSGFEYGKAR). The helical transmembrane segment at 148 to 168 (MFGCLGWALCATMAGILFNVD) threads the bilayer. Position 169 (P169) is a topological domain, periplasmic. The chain crosses the membrane as a helical span at residues 170-190 (SLVFWMGSGGALLLLLLLYLA). At 191–229 (RPSTSQTAMVMNALGANSSLISTRMVFSLFRMRQMWMFV) the chain is on the cytoplasmic side. Residues 230 to 250 (LYTIGVACVYDVFDQQFAIFF) traverse the membrane as a helical segment. At 251–265 (RSFFDTPQAGIKAFG) the chain is on the periplasmic side. The chain crosses the membrane as a helical span at residues 266-286 (FATTAGEICNAIIMFCTPWII). The Cytoplasmic portion of the chain corresponds to 287 to 294 (NRIGAKNT). A helical transmembrane segment spans residues 295-315 (LLVAGGIMTIRITGSAFATTM). Position 316 (T316) is a topological domain, periplasmic. The helical transmembrane segment at 317 to 337 (EVVILKMLHALEVPFLLVGAF) threads the bilayer. Topologically, residues 338-351 (KYITGVFDTRLSAT) are cytoplasmic. A helical membrane pass occupies residues 352–372 (VYLIGFQFSKQLAAILLSTFA). Residues 373–383 (GHLYDRMGFQN) are Periplasmic-facing. Residues 384 to 404 (TYFVLGMIVLTVTVISAFTLS) traverse the membrane as a helical segment. Over 405 to 425 (SSPGIVHPSVEKAPVAHSEIN) the chain is Cytoplasmic.

Belongs to the major facilitator superfamily. Oligosaccharide:H(+) symporter (OHS) (TC 2.A.1.5) family. As to quaternary structure, monomer.

The protein resides in the cell inner membrane. In terms of biological role, responsible for transport of raffinose into the cell. Can also transport lactose and melibiose. Has weak activity with maltose. In Escherichia coli, this protein is Raffinose permease.